We begin with the raw amino-acid sequence, 429 residues long: uncharacterized protein (429 aa).

Residues 1-12 (MSDSKEDIRNGQ) show a composition bias toward basic and acidic residues. Disordered stretches follow at residues 1 to 63 (MSDS…APEA), 257 to 306 (RSRA…SDRM), and 320 to 429 (YRGY…SDSE). A compositionally biased stretch (acidic residues) spans 328–362 (EENEEDDLGDFIAEEEEEEEQEEEQEEDEEDEEEV). Residues 369–378 (KGFDADKEAS) are compositionally biased toward basic and acidic residues.

It belongs to the LEO1 family.

It is found in the nucleus. This is an uncharacterized protein from Schizosaccharomyces pombe (strain 972 / ATCC 24843) (Fission yeast).